We begin with the raw amino-acid sequence, 426 residues long: Kelch repeat-containing protein At3g27220 (426 aa).

The helical transmembrane segment at leucine 18–cysteine 38 threads the bilayer. Kelch repeat units lie at residues leucine 123–aspartate 170, tyrosine 173–glycine 222, leucine 224–aspartate 275, lysine 276–valine 338, and serine 341–glycine 394.

The protein resides in the membrane. The protein is Kelch repeat-containing protein At3g27220 of Arabidopsis thaliana (Mouse-ear cress).